The primary structure comprises 500 residues: NAD(P)H-quinone oxidoreductase subunit 2 A, chloroplastic (500 aa).

The next 13 helical transmembrane spans lie at 14–34 (LLLF…GLIL), 47–67 (IPWF…ALLF), 89–109 (IFQF…VEYI), 114–134 (MAIT…MFLC), 139–159 (FITI…LSGY), 173–193 (YLLM…WLYG), 217–237 (PGIS…LSPA), 285–305 (WHLL…LIAI), 313–333 (MLAY…IVGD), 344–364 (YMLF…LFGL), 385–405 (ALSL…AGFF), 408–428 (LHLF…IGLL), and 474–494 (MIVC…IIAI).

Belongs to the complex I subunit 2 family. As to quaternary structure, NDH is composed of at least 16 different subunits, 5 of which are encoded in the nucleus.

The protein localises to the plastid. Its subcellular location is the chloroplast thylakoid membrane. The catalysed reaction is a plastoquinone + NADH + (n+1) H(+)(in) = a plastoquinol + NAD(+) + n H(+)(out). The enzyme catalyses a plastoquinone + NADPH + (n+1) H(+)(in) = a plastoquinol + NADP(+) + n H(+)(out). Its function is as follows. NDH shuttles electrons from NAD(P)H:plastoquinone, via FMN and iron-sulfur (Fe-S) centers, to quinones in the photosynthetic chain and possibly in a chloroplast respiratory chain. The immediate electron acceptor for the enzyme in this species is believed to be plastoquinone. Couples the redox reaction to proton translocation, and thus conserves the redox energy in a proton gradient. This is NAD(P)H-quinone oxidoreductase subunit 2 A, chloroplastic from Pelargonium hortorum (Common geranium).